Consider the following 375-residue polypeptide: Alanine racemase (375 aa).

Lys35 (proton acceptor; specific for D-alanine) is an active-site residue. Lys35 carries the post-translational modification N6-(pyridoxal phosphate)lysine. A substrate-binding site is contributed by Arg133. The Proton acceptor; specific for L-alanine role is filled by Tyr261. Met309 provides a ligand contact to substrate.

It belongs to the alanine racemase family. The cofactor is pyridoxal 5'-phosphate.

The catalysed reaction is L-alanine = D-alanine. Its pathway is amino-acid biosynthesis; D-alanine biosynthesis; D-alanine from L-alanine: step 1/1. Catalyzes the interconversion of L-alanine and D-alanine. May also act on other amino acids. In Syntrophobacter fumaroxidans (strain DSM 10017 / MPOB), this protein is Alanine racemase (alr).